The sequence spans 289 residues: N-acetylmuramoyl-L-alanine amidase AmiA (289 aa).

Positions 1–34 (MSTFKLLKTLTSRRQVLKTGLAALTLSGMSHAVA) form a signal peptide, tat-type signal. A disordered region spans residues 36–61 (EETLKTSNGHSKPKTKKTGSKRLVML). The segment covering 46-55 (SKPKTKKTGS) has biased composition (basic residues). One can recognise a MurNAc-LAA domain in the interval 59-273 (VMLDPGHGGI…IATAIANGII (215 aa)).

It belongs to the N-acetylmuramoyl-L-alanine amidase 3 family. Post-translationally, predicted to be exported by the Tat system. The position of the signal peptide cleavage has not been experimentally proven.

Its subcellular location is the periplasm. The catalysed reaction is Hydrolyzes the link between N-acetylmuramoyl residues and L-amino acid residues in certain cell-wall glycopeptides.. In terms of biological role, cell-wall hydrolase involved in septum cleavage during cell division. This is N-acetylmuramoyl-L-alanine amidase AmiA (amiA) from Salmonella typhimurium (strain LT2 / SGSC1412 / ATCC 700720).